Here is a 25-residue protein sequence, read N- to C-terminus: LASP1 neighbor protein (25 aa).

Residues 4–24 (IFILMFFAIIGLVILSYIIYL) traverse the membrane as a helical segment.

Its subcellular location is the membrane. In terms of biological role, may play a key role in the skin fibroblasts (FBs)-keratinocyte-like cells (KLCs). The protein is LASP1 neighbor protein of Homo sapiens (Human).